A 591-amino-acid chain; its full sequence is Probable methyltransferase PMT6 (591 aa).

Residues 1–13 (MRGSVIGAERSGQ) are Cytoplasmic-facing. The helical; Signal-anchor for type II membrane protein transmembrane segment at 14–34 (TIMVALVLMVGSFYTGSLFGT) threads the bilayer. Residues 35–591 (NQPIYVSHPS…FCRKRFWAII (557 aa)) lie on the Lumenal side of the membrane. Residues N87, N99, N146, N193, N323, N436, N473, and N515 are each glycosylated (N-linked (GlcNAc...) asparagine).

This sequence belongs to the methyltransferase superfamily.

It is found in the endoplasmic reticulum membrane. The sequence is that of Probable methyltransferase PMT6 from Arabidopsis thaliana (Mouse-ear cress).